A 363-amino-acid chain; its full sequence is Chorismate synthase (363 aa).

Residues 36 to 58 are disordered; it reads SESDIQGDLDRRRPGQSKITTPR. R47 contacts NADP(+). FMN contacts are provided by residues 124–126, G286, 301–305, and R327; these read RSS and KPTAT.

The protein belongs to the chorismate synthase family. Homotetramer. It depends on FMNH2 as a cofactor.

It carries out the reaction 5-O-(1-carboxyvinyl)-3-phosphoshikimate = chorismate + phosphate. It participates in metabolic intermediate biosynthesis; chorismate biosynthesis; chorismate from D-erythrose 4-phosphate and phosphoenolpyruvate: step 7/7. In terms of biological role, catalyzes the anti-1,4-elimination of the C-3 phosphate and the C-6 proR hydrogen from 5-enolpyruvylshikimate-3-phosphate (EPSP) to yield chorismate, which is the branch point compound that serves as the starting substrate for the three terminal pathways of aromatic amino acid biosynthesis. This reaction introduces a second double bond into the aromatic ring system. The polypeptide is Chorismate synthase (Crocosphaera subtropica (strain ATCC 51142 / BH68) (Cyanothece sp. (strain ATCC 51142))).